Here is a 236-residue protein sequence, read N- to C-terminus: 2-C-methyl-D-erythritol 4-phosphate cytidylyltransferase (236 aa).

This sequence belongs to the IspD/TarI cytidylyltransferase family. IspD subfamily. As to quaternary structure, homodimer.

The catalysed reaction is 2-C-methyl-D-erythritol 4-phosphate + CTP + H(+) = 4-CDP-2-C-methyl-D-erythritol + diphosphate. It participates in isoprenoid biosynthesis; isopentenyl diphosphate biosynthesis via DXP pathway; isopentenyl diphosphate from 1-deoxy-D-xylulose 5-phosphate: step 2/6. Functionally, catalyzes the formation of 4-diphosphocytidyl-2-C-methyl-D-erythritol from CTP and 2-C-methyl-D-erythritol 4-phosphate (MEP). The chain is 2-C-methyl-D-erythritol 4-phosphate cytidylyltransferase from Salmonella heidelberg (strain SL476).